The sequence spans 283 residues: Para-Rep C10 (283 aa).

Positions 3 to 96 (SIRAIHWCFT…IDGPWEYGTW (94 aa)) constitute a CRESS-DNA virus Rep endonuclease domain. Positions 10–13 (CFTL) match the RCR-1 motif. Residues glutamate 36 and histidine 42 each contribute to the a divalent metal cation site. Positions 42–44 (HLQ) match the RCR-2 motif. A Nuclear localization signal motif is present at residues 51-71 (KQTTLKKMKELLPGAHLEMAR). The active-site For DNA cleavage activity is the tyrosine 79. Positions 79 to 82 (YCQK) match the RCR-3 motif. Glutamate 84 lines the a divalent metal cation pocket. Residues 96–102 (WISTGSH) carry the Nuclear localization signal motif. 172–180 (GPHGGEGKS) serves as a coordination point for ATP.

It belongs to the nanoviridea/circoviridae replication-associated protein family. Homooligomer (Potential). Rep binds to repeated DNA motifs (iterons). The cofactor is Mg(2+). Mn(2+) serves as cofactor.

The protein resides in the host nucleus. The catalysed reaction is ATP + H2O = ADP + phosphate + H(+). In terms of biological role, initiates and terminates the replication only of its own subviral DNA molecule. The closed circular ssDNA genome is first converted to a superhelical dsDNA. Rep binds a specific hairpin at the genome origin of replication. Introduces an endonucleolytic nick within the intergenic region of the genome, thereby initiating the rolling circle replication (RCR). Following cleavage, binds covalently to the 5'-phosphate of DNA as a tyrosyl ester. The cleavage gives rise to a free 3'-OH that serves as a primer for the cellular DNA polymerase. The polymerase synthesizes the (+) strand DNA by rolling circle mechanism. After one round of replication, a Rep-catalyzed nucleotidyl transfer reaction releases a circular single-stranded virus genome, thereby terminating the replication. Displays origin-specific DNA cleavage, nucleotidyl transferase, ATPase and helicase activities. The polypeptide is Para-Rep C10 (C10) (Milk vetch dwarf C10 alphasatellite (MVDC10A)).